A 283-amino-acid chain; its full sequence is Diaminopimelate epimerase (283 aa).

Substrate-binding residues include Asn11 and Asn65. Cys74 (proton donor) is an active-site residue. Residues 75 to 76 (GN), Asn163, Asn196, and 214 to 215 (ER) each bind substrate. The active-site Proton acceptor is the Cys223. 224-225 (GT) lines the substrate pocket.

The protein belongs to the diaminopimelate epimerase family. Homodimer.

Its subcellular location is the cytoplasm. The catalysed reaction is (2S,6S)-2,6-diaminopimelate = meso-2,6-diaminopimelate. It functions in the pathway amino-acid biosynthesis; L-lysine biosynthesis via DAP pathway; DL-2,6-diaminopimelate from LL-2,6-diaminopimelate: step 1/1. Its function is as follows. Catalyzes the stereoinversion of LL-2,6-diaminopimelate (L,L-DAP) to meso-diaminopimelate (meso-DAP), a precursor of L-lysine and an essential component of the bacterial peptidoglycan. This is Diaminopimelate epimerase from Desulfitobacterium hafniense (strain DSM 10664 / DCB-2).